The primary structure comprises 310 residues: MKTLTRKLSRTAITLVLVILAFIAIFRAWVYYTESPWTRDARFSADVVAIAPDVAGLITHVNVHDNQLVKKDQVLFTIDQPRYQKALAEAEADVAYYQVLAQEKRQEAGRRNRLGVQAMSREEIDQANNVLQTVLHQLAKAQATRDLAKLDPERTVIRAPADGWVTNLNVYAGEFITRGSTAVALVKKNSFYVQAYMEETKLEGVRPGYRAEITPLGSNRVLKGTVDSVAAGVTNASSTSDAKGMATIDSNLEWVRLAQRVPVRIRLDEQQGNLWPAGTTATVVITGKQDRDASQDSFFRKLAHRLREFG.

The chain crosses the membrane as a helical span at residues 12 to 32; sequence AITLVLVILAFIAIFRAWVYY.

It belongs to the membrane fusion protein (MFP) (TC 8.A.1) family.

It is found in the cell inner membrane. In terms of biological role, forms an efflux pump with AaeB. This chain is p-hydroxybenzoic acid efflux pump subunit AaeA, found in Salmonella gallinarum (strain 287/91 / NCTC 13346).